A 410-amino-acid polypeptide reads, in one-letter code: Trans-splicing factor Raa2, chloroplastic (410 aa).

Disordered stretches follow at residues 1 to 40 and 56 to 106; these read MRTR…QRPA and AADH…QQQV. The transit peptide at 1–46 directs the protein to the chloroplast; the sequence is MRTRAGAFFGKQRSTSPSGSSTSASRQWLRSSPGRTQRPAAHRVLA. Positions 14-25 are enriched in low complexity; that stretch reads STSPSGSSTSAS. Residues 26–35 show a composition bias toward polar residues; it reads RQWLRSSPGR. The span at 96-106 shows a compositional bias: low complexity; sequence RQAQRRQQQQV.

This sequence belongs to the pseudouridine synthase TruB family. Possibly associated with other factors required for trans-splicing.

It localises to the plastid. Its subcellular location is the chloroplast. In terms of biological role, required for trans-splicing of exons 2 and 3 of the chloroplast encoded psaA mRNA (a group II intron). It is not known if this protein has pseudouridine activity; mutation of the potential active site residue does not cause loss of trans-splicing. The sequence is that of Trans-splicing factor Raa2, chloroplastic (RAA2) from Chlamydomonas reinhardtii (Chlamydomonas smithii).